Here is a 434-residue protein sequence, read N- to C-terminus: Enolase (434 aa).

Positions 158 and 167 each coordinate substrate. The active-site Proton donor is glutamate 210. Mg(2+) contacts are provided by aspartate 245, glutamate 294, and aspartate 319. Substrate is bound by residues glutamate 294 and aspartate 319. Catalysis depends on lysine 344, which acts as the Proton acceptor. Substrate-binding positions include 371 to 374 (SHRS) and lysine 395.

Belongs to the enolase family. In terms of assembly, homodimer. It depends on Mg(2+) as a cofactor.

It is found in the cytoplasm. It catalyses the reaction (2R)-2-phosphoglycerate = phosphoenolpyruvate + H2O. It functions in the pathway carbohydrate degradation; glycolysis; pyruvate from D-glyceraldehyde 3-phosphate: step 4/5. The protein is Enolase (ENO) of Schistosoma japonicum (Blood fluke).